The sequence spans 250 residues: 5-oxoprolinase subunit A (250 aa).

It belongs to the LamB/PxpA family. In terms of assembly, forms a complex composed of PxpA, PxpB and PxpC.

The enzyme catalyses 5-oxo-L-proline + ATP + 2 H2O = L-glutamate + ADP + phosphate + H(+). Functionally, catalyzes the cleavage of 5-oxoproline to form L-glutamate coupled to the hydrolysis of ATP to ADP and inorganic phosphate. This chain is 5-oxoprolinase subunit A, found in Staphylococcus haemolyticus (strain JCSC1435).